A 700-amino-acid polypeptide reads, in one-letter code: Ribonucleoside-diphosphate reductase subunit alpha (700 aa).

Substrate-binding positions include threonine 153, serine 169–cysteine 170, glycine 198, asparagine 380–glutamate 384, and proline 580–isoleucine 584. The cysteines at positions 170 and 409 are disulfide-linked. Residue asparagine 380 is the Proton acceptor of the active site. Cysteine 382 acts as the Cysteine radical intermediate in catalysis. Catalysis depends on glutamate 384, which acts as the Proton acceptor.

The protein belongs to the ribonucleoside diphosphate reductase large chain family. Tetramer of two alpha and two beta subunits.

It catalyses the reaction a 2'-deoxyribonucleoside 5'-diphosphate + [thioredoxin]-disulfide + H2O = a ribonucleoside 5'-diphosphate + [thioredoxin]-dithiol. Under complex allosteric control mediated by deoxynucleoside triphosphates and ATP binding. The type of nucleotide bound at the specificity site determines substrate preference. It seems probable that ATP makes the enzyme reduce CDP and UDP, dGTP favors ADP reduction and dTTP favors GDP reduction. Its function is as follows. Provides the precursors necessary for DNA synthesis. Catalyzes the biosynthesis of deoxyribonucleotides from the corresponding ribonucleotides. The protein is Ribonucleoside-diphosphate reductase subunit alpha of Bacillus subtilis (strain 168).